Reading from the N-terminus, the 368-residue chain is UDP-N-acetylglucosamine--N-acetylmuramyl-(pentapeptide) pyrophosphoryl-undecaprenol N-acetylglucosamine transferase (368 aa).

Residues 14 to 16 (TGG), asparagine 125, arginine 168, serine 196, and glutamine 297 contribute to the UDP-N-acetyl-alpha-D-glucosamine site.

It belongs to the glycosyltransferase 28 family. MurG subfamily.

It is found in the cell inner membrane. It carries out the reaction di-trans,octa-cis-undecaprenyl diphospho-N-acetyl-alpha-D-muramoyl-L-alanyl-D-glutamyl-meso-2,6-diaminopimeloyl-D-alanyl-D-alanine + UDP-N-acetyl-alpha-D-glucosamine = di-trans,octa-cis-undecaprenyl diphospho-[N-acetyl-alpha-D-glucosaminyl-(1-&gt;4)]-N-acetyl-alpha-D-muramoyl-L-alanyl-D-glutamyl-meso-2,6-diaminopimeloyl-D-alanyl-D-alanine + UDP + H(+). It participates in cell wall biogenesis; peptidoglycan biosynthesis. In terms of biological role, cell wall formation. Catalyzes the transfer of a GlcNAc subunit on undecaprenyl-pyrophosphoryl-MurNAc-pentapeptide (lipid intermediate I) to form undecaprenyl-pyrophosphoryl-MurNAc-(pentapeptide)GlcNAc (lipid intermediate II). The chain is UDP-N-acetylglucosamine--N-acetylmuramyl-(pentapeptide) pyrophosphoryl-undecaprenol N-acetylglucosamine transferase from Nitrobacter winogradskyi (strain ATCC 25391 / DSM 10237 / CIP 104748 / NCIMB 11846 / Nb-255).